The following is a 162-amino-acid chain: UPF0260 protein Atu0932 (162 aa).

Belongs to the UPF0260 family.

This is UPF0260 protein Atu0932 from Agrobacterium fabrum (strain C58 / ATCC 33970) (Agrobacterium tumefaciens (strain C58)).